A 1195-amino-acid polypeptide reads, in one-letter code: Chromosome partition protein Smc (1195 aa).

33 to 40 (PNGSGKSN) is an ATP binding site. Coiled-coil stretches lie at residues 185–241 (GVAQ…RQEQ), 273–348 (DAAT…IQAL), and 380–528 (QYQQ…QETQ). Residues 542 to 658 (PGVHGLVAQL…FERLDQARRY (117 aa)) enclose the SMC hinge domain. Positions 698–1043 (GESAEVRAIR…ELLLRIENFT (346 aa)) form a coiled coil.

It belongs to the SMC family. In terms of assembly, homodimer.

Its subcellular location is the cytoplasm. In terms of biological role, required for chromosome condensation and partitioning. This chain is Chromosome partition protein Smc, found in Synechococcus sp. (strain ATCC 27144 / PCC 6301 / SAUG 1402/1) (Anacystis nidulans).